Consider the following 424-residue polypeptide: Glutamate-1-semialdehyde 2,1-aminomutase (424 aa).

An N6-(pyridoxal phosphate)lysine modification is found at Lys266.

The protein belongs to the class-III pyridoxal-phosphate-dependent aminotransferase family. HemL subfamily. Homodimer. It depends on pyridoxal 5'-phosphate as a cofactor.

The protein resides in the cytoplasm. It carries out the reaction (S)-4-amino-5-oxopentanoate = 5-aminolevulinate. The protein operates within porphyrin-containing compound metabolism; protoporphyrin-IX biosynthesis; 5-aminolevulinate from L-glutamyl-tRNA(Glu): step 2/2. The chain is Glutamate-1-semialdehyde 2,1-aminomutase from Azoarcus sp. (strain BH72).